The following is a 669-amino-acid chain: 5-taurinomethyluridine-[tRNA] synthase subunit MTO1, mitochondrial (669 aa).

The N-terminal 25 residues, 1–25, are a transit peptide targeting the mitochondrion; it reads MFLLRGRGHWAAASLGRRLPLRRLR. Residues 42–47, Val154, Ser217, and Gln406 contribute to the FAD site; that span reads GGGHAG. Lys507 bears the N6-methyllysine mark.

This sequence belongs to the MnmG family. In terms of assembly, homodimer; forms a dimer in the presence of potassium. Interacts with GTPBP3; forms the GTPBP3-MTO1 complex composed of homodimers of GTPBP3 and MTO1. FAD is required as a cofactor. Ubiquitously expressed in various tissues, but with markedly elevated expression in tissues of high metabolic rates.

It localises to the mitochondrion. The enzyme catalyses 5,10-methylenetetrahydrofolate + uridine(34) in tRNA + taurine + GTP + A + H2O = 5-taurinomethyluridine(34) in tRNA + 7,8-dihydrofolate + GDP + AH2 + phosphate + H(+). Its function is as follows. Component of the GTPBP3-MTO1 complex that catalyzes the 5-taurinomethyluridine (taum(5)U) modification at the 34th wobble position (U34) of mitochondrial tRNAs (mt-tRNAs), which plays a role in mt-tRNA decoding and mitochondrial translation. Taum(5)U formation on mammalian mt-tRNA requires the presence of both GTPBP3-mediated GTPase activity and MTO1 catalytic activity. This is 5-taurinomethyluridine-[tRNA] synthase subunit MTO1, mitochondrial from Mus musculus (Mouse).